A 255-amino-acid chain; its full sequence is Indole-3-glycerol phosphate synthase (255 aa).

The protein belongs to the TrpC family.

The catalysed reaction is 1-(2-carboxyphenylamino)-1-deoxy-D-ribulose 5-phosphate + H(+) = (1S,2R)-1-C-(indol-3-yl)glycerol 3-phosphate + CO2 + H2O. Its pathway is amino-acid biosynthesis; L-tryptophan biosynthesis; L-tryptophan from chorismate: step 4/5. This Shouchella clausii (strain KSM-K16) (Alkalihalobacillus clausii) protein is Indole-3-glycerol phosphate synthase.